Here is a 723-residue protein sequence, read N- to C-terminus: Catalase-peroxidase (723 aa).

Positions 96–224 form a cross-link, tryptophyl-tyrosyl-methioninium (Trp-Tyr) (with M-250); that stretch reads WHAAGSYRVA…LAAVMMGLIY (129 aa). Catalysis depends on His-97, which acts as the Proton acceptor. Residues 224-250 constitute a cross-link (tryptophyl-tyrosyl-methioninium (Tyr-Met) (with W-96)); sequence YVNPEGVDGQPDPLKTAQDVRVTFARM. His-265 contacts heme b.

The protein belongs to the peroxidase family. Peroxidase/catalase subfamily. Homodimer or homotetramer. It depends on heme b as a cofactor. Post-translationally, formation of the three residue Trp-Tyr-Met cross-link is important for the catalase, but not the peroxidase activity of the enzyme.

It carries out the reaction H2O2 + AH2 = A + 2 H2O. The catalysed reaction is 2 H2O2 = O2 + 2 H2O. In terms of biological role, bifunctional enzyme with both catalase and broad-spectrum peroxidase activity. This chain is Catalase-peroxidase, found in Leptothrix cholodnii (strain ATCC 51168 / LMG 8142 / SP-6) (Leptothrix discophora (strain SP-6)).